The primary structure comprises 350 residues: S-adenosylmethionine:tRNA ribosyltransferase-isomerase (350 aa).

The protein belongs to the QueA family. In terms of assembly, monomer.

The protein resides in the cytoplasm. The enzyme catalyses 7-aminomethyl-7-carbaguanosine(34) in tRNA + S-adenosyl-L-methionine = epoxyqueuosine(34) in tRNA + adenine + L-methionine + 2 H(+). Its pathway is tRNA modification; tRNA-queuosine biosynthesis. In terms of biological role, transfers and isomerizes the ribose moiety from AdoMet to the 7-aminomethyl group of 7-deazaguanine (preQ1-tRNA) to give epoxyqueuosine (oQ-tRNA). The protein is S-adenosylmethionine:tRNA ribosyltransferase-isomerase of Vibrio vulnificus (strain YJ016).